A 234-amino-acid chain; its full sequence is Large ribosomal subunit protein uL1 (234 aa).

This sequence belongs to the universal ribosomal protein uL1 family. In terms of assembly, part of the 50S ribosomal subunit.

Binds directly to 23S rRNA. The L1 stalk is quite mobile in the ribosome, and is involved in E site tRNA release. Functionally, protein L1 is also a translational repressor protein, it controls the translation of the L11 operon by binding to its mRNA. The chain is Large ribosomal subunit protein uL1 from Anaeromyxobacter dehalogenans (strain 2CP-C).